Here is a 384-residue protein sequence, read N- to C-terminus: L-aspartate decarboxylase (384 aa).

Lysine 231 is modified (N6-(pyridoxal phosphate)lysine).

It belongs to the group II decarboxylase family. MfnA subfamily. In terms of assembly, homodimer. Can also form homohexamers. The cofactor is pyridoxal 5'-phosphate.

The catalysed reaction is L-aspartate + H(+) = beta-alanine + CO2. It participates in cofactor biosynthesis; coenzyme A biosynthesis. Inhibited by hydroxylamine. Its function is as follows. Catalyzes the decarboxylation of L-aspartate to produce beta-alanine. In vitro, can also catalyze the decarboxylation of L-glutamate to produce 4-aminobutanoate, but this activity does not seem necessary in vivo. Shows much higher activity with L-aspartate than with L-glutamate. Does not decarboxylate L-tyrosine. The chain is L-aspartate decarboxylase from Thermococcus kodakarensis (strain ATCC BAA-918 / JCM 12380 / KOD1) (Pyrococcus kodakaraensis (strain KOD1)).